The sequence spans 361 residues: dTDP-glucose 4,6-dehydratase (361 aa).

NAD(+) is bound by residues 11 to 12, 32 to 35, 58 to 59, 80 to 84, and Thr-99; these read FI, DKLT, DI, and LAAES. A substrate-binding site is contributed by Ser-84. Thr-133 provides a ligand contact to substrate. Residue Asp-134 is the Proton donor of the active site. Catalysis depends on proton acceptor residues Glu-135 and Tyr-167. Position 167–171 (167–171) interacts with NAD(+); it reads YSASK. Substrate is bound at residue Asn-196. Asn-197 provides a ligand contact to NAD(+). Substrate-binding positions include 206 to 207, 222 to 224, Arg-231, Asn-266, 296 to 300, and Tyr-357; these read KL, PIY, and DRPGH.

This sequence belongs to the NAD(P)-dependent epimerase/dehydratase family. dTDP-glucose dehydratase subfamily. As to quaternary structure, homodimer. The cofactor is NAD(+).

It carries out the reaction dTDP-alpha-D-glucose = dTDP-4-dehydro-6-deoxy-alpha-D-glucose + H2O. It functions in the pathway carbohydrate biosynthesis; dTDP-L-rhamnose biosynthesis. It participates in bacterial outer membrane biogenesis; LPS O-antigen biosynthesis. Its function is as follows. Catalyzes the dehydration of dTDP-D-glucose to form dTDP-6-deoxy-D-xylo-4-hexulose via a three-step process involving oxidation, dehydration and reduction. The chain is dTDP-glucose 4,6-dehydratase from Salmonella typhimurium (strain LT2 / SGSC1412 / ATCC 700720).